Consider the following 168-residue polypeptide: MKVASGSAAAAAGPSCSLKAGRTAGEVVLGLSEQSVAISRCAGTRLPALLDEQQVNVLLYDMNGCYSRLKELVPTLPQNRKVSKVEILQHVIDYIRDLQLELNSESEVGTTGGRGLPVRAPLSTLNGEISALAAEVRSESEYYIILQWETEATGGGCPPSLLFRRIAI.

The 53-residue stretch at 46-98 (LPALLDEQQVNVLLYDMNGCYSRLKELVPTLPQNRKVSKVEILQHVIDYIRDL) folds into the bHLH domain. Residues 53 to 106 (QQVNVLLYDMNGCYSRLKELVPTLPQNRKVSKVEILQHVIDYIRDLQLELNSES) are interaction with IFI204. The short motif at 91–104 (VIDYIRDLQLELNS) is the Nuclear export signal element.

As to quaternary structure, heterodimer with other HLH proteins. Interacts with CLOCK and BMAL1. Interacts with COPS5, IFI204, GATA4 and NKX2-5. Post-translationally, polyubiquitinated; which is favored by Ifi204 and leads to proteasomal degradation.

The protein resides in the cytoplasm. It is found in the nucleus. Functionally, transcriptional regulator (lacking a basic DNA binding domain) which negatively regulates the basic helix-loop-helix (bHLH) transcription factors by forming heterodimers and inhibiting their DNA binding and transcriptional activity. Implicated in regulating a variety of cellular processes, including cellular growth, senescence, differentiation, apoptosis, angiogenesis, and neoplastic transformation. Inhibits skeletal muscle and cardiac myocyte differentiation. Regulates the circadian clock by repressing the transcriptional activator activity of the CLOCK-BMAL1 heterodimer. The chain is DNA-binding protein inhibitor ID-1 (Id1) from Mus musculus (Mouse).